The chain runs to 97 residues: Aspartyl/glutamyl-tRNA(Asn/Gln) amidotransferase subunit C (97 aa).

Belongs to the GatC family. As to quaternary structure, heterotrimer of A, B and C subunits.

It catalyses the reaction L-glutamyl-tRNA(Gln) + L-glutamine + ATP + H2O = L-glutaminyl-tRNA(Gln) + L-glutamate + ADP + phosphate + H(+). The catalysed reaction is L-aspartyl-tRNA(Asn) + L-glutamine + ATP + H2O = L-asparaginyl-tRNA(Asn) + L-glutamate + ADP + phosphate + 2 H(+). Its function is as follows. Allows the formation of correctly charged Asn-tRNA(Asn) or Gln-tRNA(Gln) through the transamidation of misacylated Asp-tRNA(Asn) or Glu-tRNA(Gln) in organisms which lack either or both of asparaginyl-tRNA or glutaminyl-tRNA synthetases. The reaction takes place in the presence of glutamine and ATP through an activated phospho-Asp-tRNA(Asn) or phospho-Glu-tRNA(Gln). The sequence is that of Aspartyl/glutamyl-tRNA(Asn/Gln) amidotransferase subunit C from Sulfolobus acidocaldarius (strain ATCC 33909 / DSM 639 / JCM 8929 / NBRC 15157 / NCIMB 11770).